The primary structure comprises 416 residues: MEKMNITNQQHDAFVKSHPNGDLLQLSKWADTKKLTGWYSRRIAVGENGQIKGVGQLLFKKIPKLPYTLCYVSRGFVADYNNKEVLEALLSYAKEVAKDEKSYAIKIDPDVEVDKGAEALKNLRELGFKHKGFKEGLSKDYIQPRMTMITPIDKTDDELVQSFERRNRSKVRLALKRGTKVERSNREGLKIFANLMKITGERDGFLTRDISYFENIYDALHEDGDAELFLVKLEPKPVLDTVNQDLEAQLAEKEKLQSKKQDKKTLNKLNDIDNKIKKTNELKSDLTELEKSEPEGIYLSGALLMFAGNKSYYLYGASSNDYRDFLPNHHMQFEMMKYAREHGATTYDFGGTDNDPDKDSEHYGLWAFKRVWGTYLSEKIGEFDYVLNQPLYHLVEKVKPRLTKAKIKISRKLKGK.

Belongs to the FemABX family.

It is found in the cytoplasm. It catalyses the reaction beta-D-GlcNAc-(1-&gt;4)-Mur2Ac(oyl-L-Ala-D-isoglutaminyl-L-Lys-D-Ala-D-Ala)-di-trans,octa-cis-undecaprenyl diphosphate + glycyl-tRNA(Gly) = beta-D-GlcNAc-(1-&gt;4)-Mur2Ac(oyl-L-Ala-D-isoglutaminyl-L-Lys-(N(6)-Gly)-D-Ala-D-Ala)-di-trans,octa-cis-undecaprenyl diphosphate + tRNA(Gly) + H(+). Its function is as follows. Catalyzes the incorporation of amino acid(s) into the interchain peptide bridge of peptidoglycan, using aminoacyl-tRNA as amino acid donor. The chain is Lipid II:glycine glycyltransferase (femX) from Staphylococcus epidermidis (strain ATCC 35984 / DSM 28319 / BCRC 17069 / CCUG 31568 / BM 3577 / RP62A).